A 325-amino-acid polypeptide reads, in one-letter code: Histone deacetylase 8 (325 aa).

The histone deacetylase stretch occupies residues 1–272; sequence MSRVVKPKVA…WTYLTALIVG (272 aa). Asp49 is a binding site for substrate. His91 serves as the catalytic Proton acceptor. Gly99 is a binding site for substrate. Residues Asp126, His128, and Asp215 each contribute to the a divalent metal cation site. Residue Tyr254 coordinates substrate.

It belongs to the histone deacetylase family. HD type 1 subfamily. Requires a divalent metal cation as cofactor.

The protein localises to the nucleus. Its subcellular location is the chromosome. It localises to the cytoplasm. The enzyme catalyses N(6)-acetyl-L-lysyl-[histone] + H2O = L-lysyl-[histone] + acetate. It catalyses the reaction N(6)-acetyl-L-lysyl-[protein] + H2O = L-lysyl-[protein] + acetate. It carries out the reaction N(6)-(2E)-butenoyl-L-lysyl-[protein] + H2O = (2E)-2-butenoate + L-lysyl-[protein]. Its activity is inhibited by trichostatin A (TSA) and butyrate, 2 well known histone deacetylase inhibitors. Its function is as follows. Histone deacetylase that catalyzes the deacetylation of lysine residues on the N-terminal part of the core histones (H2A, H2B, H3 and H4). Histone deacetylation gives a tag for epigenetic repression and plays an important role in transcriptional regulation, cell cycle progression and developmental events. Histone deacetylases act via the formation of large multiprotein complexes. Also involved in the deacetylation of non-histone proteins. In addition to protein deacetylase activity, also has protein-lysine deacylase activity: acts as a protein decrotonylase by mediating decrotonylation ((2E)-butenoyl) of histones. This Xenopus laevis (African clawed frog) protein is Histone deacetylase 8 (hdac8).